The chain runs to 194 residues: Lysozyme g-like protein 1 (194 aa).

Residues 1 to 19 (MSALWLLLGLLALMDLSES) form the signal peptide. 2 disulfide bridges follow: Cys-24–Cys-80 and Cys-38–Cys-49.

Belongs to the glycosyl hydrolase 23 family.

It localises to the secreted. In Homo sapiens (Human), this protein is Lysozyme g-like protein 1 (LYG1).